The primary structure comprises 133 residues: Phosphoribosyl-AMP cyclohydrolase (133 aa).

Position 77 (Asp77) interacts with Mg(2+). Residue Cys78 participates in Zn(2+) binding. The Mg(2+) site is built by Asp79 and Asp81. Zn(2+)-binding residues include Cys95 and Cys102.

It belongs to the PRA-CH family. In terms of assembly, homodimer. Mg(2+) serves as cofactor. It depends on Zn(2+) as a cofactor.

The protein resides in the cytoplasm. The enzyme catalyses 1-(5-phospho-beta-D-ribosyl)-5'-AMP + H2O = 1-(5-phospho-beta-D-ribosyl)-5-[(5-phospho-beta-D-ribosylamino)methylideneamino]imidazole-4-carboxamide. Its pathway is amino-acid biosynthesis; L-histidine biosynthesis; L-histidine from 5-phospho-alpha-D-ribose 1-diphosphate: step 3/9. In terms of biological role, catalyzes the hydrolysis of the adenine ring of phosphoribosyl-AMP. This Thiobacillus denitrificans (strain ATCC 25259 / T1) protein is Phosphoribosyl-AMP cyclohydrolase.